Reading from the N-terminus, the 638-residue chain is Chaperone protein DnaK (638 aa).

Thr198 carries the post-translational modification Phosphothreonine; by autocatalysis. Disordered regions lie at residues 539–559 (DGLA…LASD) and 602–638 (QAKA…DDKK). The span at 611-623 (GQAHDAGQEKPAD) shows a compositional bias: basic and acidic residues. Over residues 624-638 (DVVDAEFEEVKDDKK) the composition is skewed to acidic residues.

The protein belongs to the heat shock protein 70 family.

In terms of biological role, acts as a chaperone. This Shewanella frigidimarina (strain NCIMB 400) protein is Chaperone protein DnaK.